Consider the following 97-residue polypeptide: Protein S100-A10 (97 aa).

N6-acetyllysine is present on residues Lys23, Lys28, Lys54, and Lys57. One can recognise an EF-hand domain in the interval 47–82 (KDPLAVDKIMKDLDQCRDGKVGFQSFLSLVAGLTIA). An ancestral calcium site region spans residues 60 to 71 (DQCRDGKVGFQS).

This sequence belongs to the S-100 family. As to quaternary structure, heterotetramer containing 2 light chains of S100A10/p11 and 2 heavy chains of ANXA2/p36. Interacts with SCN10A. Interacts with TASOR.

In terms of biological role, because S100A10 induces the dimerization of ANXA2/p36, it may function as a regulator of protein phosphorylation in that the ANXA2 monomer is the preferred target (in vitro) of tyrosine-specific kinase. This chain is Protein S100-A10 (S100a10), found in Mus musculus (Mouse).